The sequence spans 302 residues: Putative S-adenosyl-L-methionine-dependent methyltransferase MUL_2961 (302 aa).

S-adenosyl-L-methionine contacts are provided by residues D128 and D157 to L158.

Belongs to the UPF0677 family.

Functionally, exhibits S-adenosyl-L-methionine-dependent methyltransferase activity. This Mycobacterium ulcerans (strain Agy99) protein is Putative S-adenosyl-L-methionine-dependent methyltransferase MUL_2961.